The sequence spans 512 residues: CaM kinase-like vesicle-associated protein (512 aa).

Residues 24–286 (YDLGQVIKTE…AEEAISHEWI (263 aa)) enclose the Protein kinase domain. Positions 328 to 347 (APEQSGTAATQSASDAATPG) are disordered. Low complexity predominate over residues 332–347 (SGTAATQSASDAATPG). Position 392 is a phosphoserine (S392). The segment at 393–512 (ADRSATPATD…AQESQRVETS (120 aa)) is disordered. Residues 398–439 (TPATDGSATPATDGSVTPATDGSITPATDGSVTPATDRSATP) show a composition bias toward polar residues. T446 is subject to Phosphothreonine. Residues 449–460 (TEESTVPATQSS) are compositionally biased toward polar residues. Positions 461–478 (ALPAAKAAATPEPAVAQP) are enriched in low complexity. T470 bears the Phosphothreonine mark.

The protein belongs to the protein kinase superfamily. CAMK Ser/Thr protein kinase family. As to quaternary structure, interacts with calmodulin, in the presence of calcium. Ca(2+) serves as cofactor.

It localises to the cell membrane. It is found in the cytoplasmic vesicle membrane. In terms of biological role, does not appear to have detectable kinase activity. This is CaM kinase-like vesicle-associated protein (Camkv) from Mus musculus (Mouse).